A 168-amino-acid chain; its full sequence is uncharacterized protein (168 aa).

It is found in the mitochondrion. This is an uncharacterized protein from Marchantia polymorpha (Common liverwort).